Reading from the N-terminus, the 846-residue chain is FNIP repeat-containing protein DDB_G0289381 (846 aa).

Residues 1–11 (MKLLSFKKKPS) show a composition bias toward basic residues. The segment at 1–39 (MKLLSFKKKPSLTKSQSCPDKLKNLKEQQKDPKNGANYD) is disordered. Residues 20-33 (DKLKNLKEQQKDPK) show a composition bias toward basic and acidic residues. 4 FNIP repeats span residues 159 to 193 (IPNH…FGEK), 194 to 239 (FNQV…FGNN), 240 to 283 (FDQI…FQEN), and 284 to 325 (FNQP…YGGD). The tract at residues 362-384 (SSISLDISGGGSGSGSGVNSTTT) is disordered. FNIP repeat units lie at residues 458-500 (FQQL…FGDG), 501-546 (FNQQ…FGKS), and 654-693 (FNQS…MFNK). The disordered stretch occupies residues 702–734 (SNNNNENNNENNNENNNENNNENNNENNNNTNS). The stretch at 702 to 734 (SNNNNENNNENNNENNNENNNENNNENNNNTNS) forms a coiled coil.

The chain is FNIP repeat-containing protein DDB_G0289381 from Dictyostelium discoideum (Social amoeba).